The chain runs to 653 residues: DNA polymerase (653 aa).

It belongs to the DNA polymerase type-B family.

The enzyme catalyses DNA(n) + a 2'-deoxyribonucleoside 5'-triphosphate = DNA(n+1) + diphosphate. Replicates viral genomic DNA. The protein is DNA polymerase of Acidianus convivator (ABV).